The chain runs to 215 residues: Pyrophosphate-energized proton pump 2 (215 aa).

5 consecutive transmembrane segments (helical) span residues 16 to 36, 51 to 71, 86 to 106, 136 to 156, and 164 to 184; these read VYPL…TFFV, GLIA…YATV, GTNL…IVVI, GLAV…GGII, and LFGT…IVAL.

It belongs to the H(+)-translocating pyrophosphatase (TC 3.A.10) family. In terms of assembly, homodimer. Mg(2+) serves as cofactor.

The protein localises to the cell inner membrane. It carries out the reaction diphosphate + H2O + H(+)(in) = 2 phosphate + 2 H(+)(out). Its function is as follows. Proton pump that utilizes the energy of pyrophosphate hydrolysis as the driving force for proton movement across the membrane. Generates a proton motive force. This is Pyrophosphate-energized proton pump 2 (hppA2) from Rhizobium leguminosarum bv. trifolii.